The sequence spans 407 residues: Odorant receptor 67a (407 aa).

Topologically, residues 1-40 (MDNVAEMPEEKYVEVDDFLRLAVKFYNTLGIDPYETGRKR) are cytoplasmic. A helical transmembrane segment spans residues 41–61 (TIWFQIYFALNMFNMVFSFYA). Over 62 to 79 (EVATLVDRLRDNENFLES) the chain is Extracellular. The chain crosses the membrane as a helical span at residues 80–100 (CILLSYVSFVVMGLSKIGAVM). Topologically, residues 101–144 (KKKPKMTALVRQLETCFPSPSAKVQEEYAVKSWLKRCHIYTKGF) are cytoplasmic. A helical membrane pass occupies residues 145–165 (GGLFMIMYFAHALIPLFIYFI). Residues 166–208 (QRVLLHYPDAKQIMPFYQLEPWEFRDSWLFYPSYFHQSSAGYT) are Extracellular-facing. Residues 209–229 (ATCGSIAGDLMIFAVVLQVIM) form a helical membrane-spanning segment. At 230-278 (HYERLAKVLREFKIQAHNAPNGAKEDIRKLQSLVANHIDILRLTDLMNE) the chain is on the cytoplasmic side. A helical transmembrane segment spans residues 279–300 (VFGIPLLLNFIASALLVCLVGV). The Extracellular segment spans residues 301-314 (QLTIALSPEYFCKQ). A helical membrane pass occupies residues 315-331 (MLFLISVLLEVYLLCSF). The Cytoplasmic portion of the chain corresponds to 332 to 378 (SQRLIDASENVGHAAYDMDWLGSDKRFKKILIFISMRSQKPVCLKAT). Residues 379–401 (VVLDLSMPTMSIFLGMSYKFFCA) traverse the membrane as a helical segment. The Extracellular portion of the chain corresponds to 402–407 (VRTMYQ).

The protein belongs to the insect chemoreceptor superfamily. Heteromeric odorant receptor channel (TC 1.A.69) family. Or49a subfamily. As to quaternary structure, interacts with Orco. Complexes exist early in the endomembrane system in olfactory sensory neurons (OSNs), coupling these complexes to the conserved ciliary trafficking pathway. As to expression, expressed in olfactory sensory neurons in the antenna.

The protein resides in the cell membrane. Functionally, odorant receptor which mediates acceptance or avoidance behavior, depending on its substrates. The odorant receptor repertoire encodes a large collection of odor stimuli that vary widely in identity, intensity, and duration. Forms a complex with Orco to form odorant-sensing units, providing sensitive and prolonged odorant signaling and calcium permeability. Involved in the behavioral responses to benzaldehyde and acetophenone. This Drosophila melanogaster (Fruit fly) protein is Odorant receptor 67a (Or67a).